The sequence spans 178 residues: Large ribosomal subunit protein uL5 (178 aa).

Belongs to the universal ribosomal protein uL5 family. In terms of assembly, part of the 50S ribosomal subunit; part of the 5S rRNA/L5/L18/L25 subcomplex. Contacts the 5S rRNA and the P site tRNA. Forms a bridge to the 30S subunit in the 70S ribosome.

Functionally, this is one of the proteins that bind and probably mediate the attachment of the 5S RNA into the large ribosomal subunit, where it forms part of the central protuberance. In the 70S ribosome it contacts protein S13 of the 30S subunit (bridge B1b), connecting the 2 subunits; this bridge is implicated in subunit movement. Contacts the P site tRNA; the 5S rRNA and some of its associated proteins might help stabilize positioning of ribosome-bound tRNAs. This chain is Large ribosomal subunit protein uL5, found in Prochlorococcus marinus subsp. pastoris (strain CCMP1986 / NIES-2087 / MED4).